The primary structure comprises 291 residues: Cytosolic Fe-S cluster assembly factor CFD1 (291 aa).

24-31 (GKGGVGKS) serves as a coordination point for ATP. [4Fe-4S] cluster is bound by residues Cys-199 and Cys-202. Positions 270–291 (ENEEEAKETAEEEKSRAATNGQ) are disordered. The span at 276–285 (KETAEEEKSR) shows a compositional bias: basic and acidic residues.

This sequence belongs to the Mrp/NBP35 ATP-binding proteins family. NUBP2/CFD1 subfamily. As to quaternary structure, heterotetramer of 2 NBP35 and 2 CFD1 chains. It depends on [4Fe-4S] cluster as a cofactor.

It is found in the cytoplasm. Its function is as follows. Component of the cytosolic iron-sulfur (Fe/S) protein assembly (CIA) machinery. Required for maturation of extramitochondrial Fe-S proteins. The NBP35-CFD1 heterotetramer forms a Fe-S scaffold complex, mediating the de novo assembly of an Fe-S cluster and its transfer to target apoproteins. Required for biogenesis and export of both ribosomal subunits, which may reflect a role in assembly of the Fe/S clusters in RLI1, a protein which performs rRNA processing and ribosome export. This Yarrowia lipolytica (strain CLIB 122 / E 150) (Yeast) protein is Cytosolic Fe-S cluster assembly factor CFD1.